A 296-amino-acid polypeptide reads, in one-letter code: Diaminopimelate epimerase (296 aa).

Residues Asn17, Gln49, and Asn69 each contribute to the substrate site. Cys78 (proton donor) is an active-site residue. Substrate is bound by residues Gly79–Asn80, Asn171, Asn205, and Glu223–Arg224. Cys232 acts as the Proton acceptor in catalysis. Gly233–Thr234 lines the substrate pocket.

Belongs to the diaminopimelate epimerase family. In terms of assembly, homodimer.

Its subcellular location is the cytoplasm. The enzyme catalyses (2S,6S)-2,6-diaminopimelate = meso-2,6-diaminopimelate. It participates in amino-acid biosynthesis; L-lysine biosynthesis via DAP pathway; DL-2,6-diaminopimelate from LL-2,6-diaminopimelate: step 1/1. Functionally, catalyzes the stereoinversion of LL-2,6-diaminopimelate (L,L-DAP) to meso-diaminopimelate (meso-DAP), a precursor of L-lysine and an essential component of the bacterial peptidoglycan. The polypeptide is Diaminopimelate epimerase (Methylorubrum extorquens (strain CM4 / NCIMB 13688) (Methylobacterium extorquens)).